The primary structure comprises 241 residues: Tetrahydromethanopterin S-methyltransferase subunit A (241 aa).

The Cytoplasmic segment spans residues 1 to 220 (MAEKKEPAEG…HSGVLAGKIE (220 aa)). 5-hydroxybenzimidazolylcob(I)amide is bound at residue H85. Residues 221 to 241 (GIMVGLVLSLFVLGLLLFGGM) traverse the membrane as a helical segment.

Belongs to the MtrA family. In terms of assembly, the complex is composed of 8 subunits; MtrA, MtrB, MtrC, MtrD, MtrE, MtrF, MtrG and MtrH. It depends on 5-hydroxybenzimidazolylcob(I)amide as a cofactor.

Its subcellular location is the cell membrane. It carries out the reaction 5-methyl-5,6,7,8-tetrahydromethanopterin + coenzyme M + 2 Na(+)(in) = 5,6,7,8-tetrahydromethanopterin + methyl-coenzyme M + 2 Na(+)(out). The protein operates within one-carbon metabolism; methanogenesis from CO(2); methyl-coenzyme M from 5,10-methylene-5,6,7,8-tetrahydromethanopterin: step 2/2. Functionally, part of a complex that catalyzes the formation of methyl-coenzyme M and tetrahydromethanopterin from coenzyme M and methyl-tetrahydromethanopterin. This is an energy-conserving, sodium-ion translocating step. The chain is Tetrahydromethanopterin S-methyltransferase subunit A from Methanohalobium evestigatum (strain ATCC BAA-1072 / DSM 3721 / NBRC 107634 / OCM 161 / Z-7303).